We begin with the raw amino-acid sequence, 282 residues long: Shikimate dehydrogenase (NADP(+)) (282 aa).

Shikimate-binding positions include 15 to 17 (SKS) and Thr-62. Residue Lys-66 is the Proton acceptor of the active site. Shikimate-binding residues include Asn-87 and Asp-103. NADP(+) is bound by residues 127 to 131 (GAGGA), 151 to 156 (NRTHTK), and Met-220. Tyr-222 serves as a coordination point for shikimate. Gly-244 is a binding site for NADP(+).

It belongs to the shikimate dehydrogenase family. As to quaternary structure, homodimer.

It catalyses the reaction shikimate + NADP(+) = 3-dehydroshikimate + NADPH + H(+). Its pathway is metabolic intermediate biosynthesis; chorismate biosynthesis; chorismate from D-erythrose 4-phosphate and phosphoenolpyruvate: step 4/7. Involved in the biosynthesis of the chorismate, which leads to the biosynthesis of aromatic amino acids. Catalyzes the reversible NADPH linked reduction of 3-dehydroshikimate (DHSA) to yield shikimate (SA). This chain is Shikimate dehydrogenase (NADP(+)), found in Shewanella baltica (strain OS185).